The following is a 271-amino-acid chain: Bifunctional protein FolD (271 aa).

Residues 154–156 (GRS), Thr181, and Ile222 contribute to the NADP(+) site.

Belongs to the tetrahydrofolate dehydrogenase/cyclohydrolase family. As to quaternary structure, homodimer.

The catalysed reaction is (6R)-5,10-methylene-5,6,7,8-tetrahydrofolate + NADP(+) = (6R)-5,10-methenyltetrahydrofolate + NADPH. The enzyme catalyses (6R)-5,10-methenyltetrahydrofolate + H2O = (6R)-10-formyltetrahydrofolate + H(+). The protein operates within one-carbon metabolism; tetrahydrofolate interconversion. Catalyzes the oxidation of 5,10-methylenetetrahydrofolate to 5,10-methenyltetrahydrofolate and then the hydrolysis of 5,10-methenyltetrahydrofolate to 10-formyltetrahydrofolate. The polypeptide is Bifunctional protein FolD (Thermosipho melanesiensis (strain DSM 12029 / CIP 104789 / BI429)).